Reading from the N-terminus, the 515-residue chain is WUSCHEL-related homeobox 12 (515 aa).

Composition is skewed to polar residues over residues 23–32 (QQQPDMNGNG) and 44–57 (TAAT…SLLS). 3 disordered regions span residues 23–76 (QQQP…WNPR), 130–156 (NKLR…PPST), and 176–195 (LLAA…GSSK). Basic and acidic residues predominate over residues 62 to 71 (EGTRNPEPKP). The homeobox; WUS-type DNA-binding region spans 68–132 (EPKPRWNPRP…NRKSRTKNKL (65 aa)). The span at 130-143 (NKLRAAGHHHHHGR) shows a compositional bias: basic residues. 2 stretches are compositionally biased toward low complexity: residues 144-156 (AAAL…PPST) and 177-195 (LAAT…GSSK).

The protein belongs to the WUS homeobox family.

It localises to the nucleus. In terms of biological role, transcription factor which may be involved in developmental processes. This Oryza sativa subsp. japonica (Rice) protein is WUSCHEL-related homeobox 12 (WOX12).